The chain runs to 168 residues: Xanthine-guanine phosphoribosyltransferase (168 aa).

5-phospho-alpha-D-ribose 1-diphosphate is bound by residues 43–44 (RG) and 102–110 (DDLVDTGAT). Asp103 contributes to the Mg(2+) binding site. Asp106 and Ile149 together coordinate guanine. Asp106 and Ile149 together coordinate xanthine. Residues 106-110 (DTGAT) and 148-149 (WI) each bind GMP.

The protein belongs to the purine/pyrimidine phosphoribosyltransferase family. XGPT subfamily. Homotetramer. It depends on Mg(2+) as a cofactor.

It localises to the cell inner membrane. It catalyses the reaction GMP + diphosphate = guanine + 5-phospho-alpha-D-ribose 1-diphosphate. The catalysed reaction is XMP + diphosphate = xanthine + 5-phospho-alpha-D-ribose 1-diphosphate. The enzyme catalyses IMP + diphosphate = hypoxanthine + 5-phospho-alpha-D-ribose 1-diphosphate. The protein operates within purine metabolism; GMP biosynthesis via salvage pathway; GMP from guanine: step 1/1. It participates in purine metabolism; XMP biosynthesis via salvage pathway; XMP from xanthine: step 1/1. Its function is as follows. Purine salvage pathway enzyme that catalyzes the transfer of the ribosyl-5-phosphate group from 5-phospho-alpha-D-ribose 1-diphosphate (PRPP) to the N9 position of the 6-oxopurines guanine and xanthine to form the corresponding ribonucleotides GMP (guanosine 5'-monophosphate) and XMP (xanthosine 5'-monophosphate), with the release of PPi. To a lesser extent, also acts on hypoxanthine. The protein is Xanthine-guanine phosphoribosyltransferase of Nitrobacter winogradskyi (strain ATCC 25391 / DSM 10237 / CIP 104748 / NCIMB 11846 / Nb-255).